Here is an 821-residue protein sequence, read N- to C-terminus: BDNF/NT-3 growth factors receptor (821 aa).

Residues 1-31 (MSPWLKWHGPAMARLWGLCLLVLGFWRASLA) form the signal peptide. 2 disulfide bridges follow: cysteine 32–cysteine 38 and cysteine 36–cysteine 45. In terms of domain architecture, LRRNT spans 32 to 61 (CPTSCKCSSARIWCTEPSPGIVAFPRLEPN). The Extracellular segment spans residues 32–429 (CPTSCKCSSA…DVADQSNREH (398 aa)). N-linked (GlcNAc...) asparagine glycosylation is found at asparagine 67, asparagine 95, and asparagine 121. LRR repeat units follow at residues 92–113 (GLRN…AFLK) and 116–137 (NLRH…HFRH). Residues 148-196 (NPFTCSCDIMWLKTLQETKSSPDTQDLYCLNESSKNMPLANLQIPNCGL) form the LRRCT domain. Cystine bridges form between cysteine 152–cysteine 176 and cysteine 154–cysteine 194. Residues asparagine 178, asparagine 205, asparagine 241, asparagine 254, asparagine 280, asparagine 325, asparagine 338, asparagine 350, and asparagine 411 are each glycosylated (N-linked (GlcNAc...) asparagine). Ig-like C2-type domains lie at 197–282 (PSAR…VNLT) and 301–365 (WCIP…MAKN). A disulfide bridge connects residues cysteine 218 and cysteine 266. Cysteine 302 and cysteine 345 are disulfide-bonded. Residues 430–453 (LSVYAVVVIASVVGFCLLVMLLLL) form a helical membrane-spanning segment. The interval 454-465 (KLARHSKFGMKG) is interaction with MAPK8IP3/JIP3. Over 454 to 821 (KLARHSKFGM…ASPVYLDILG (368 aa)) the chain is Cytoplasmic. The interval 474-497 (DDSASPLHHISNGSNTPSSSEGGP) is disordered. Residues 484-494 (SNGSNTPSSSE) are compositionally biased toward polar residues. Tyrosine 515 is modified (phosphotyrosine). Residues 537-806 (IVLKRELGEG…KNIKSIHTLL (270 aa)) enclose the Protein kinase domain. ATP is bound by residues 543-551 (LGEGAFGKV) and lysine 571. Aspartate 675 acts as the Proton acceptor in catalysis. A phosphotyrosine; by autocatalysis mark is found at tyrosine 701, tyrosine 705, tyrosine 706, and tyrosine 816.

The protein belongs to the protein kinase superfamily. Tyr protein kinase family. Insulin receptor subfamily. As to quaternary structure, exists in a dynamic equilibrium between monomeric (low affinity) and dimeric (high affinity) structures. Interacts (phosphorylated upon activation by BDNF) with SHC1; mediates SHC1 phosphorylation and activation. Interacts (phosphorylated upon activation by BDNF) with PLCG1 and/or PLCG2; mediates PLCG1 phosphorylation and activation. Interacts with SH2B1 and SH2B2. Interacts with NGFR; may regulate the ligand specificity of the receptor. Interacts with SORCS2; this interaction is important for normal targeting to post-synaptic densities in response to high-frequency stimulation. Interacts (phosphorylated upon ligand-binding) with SH2D1A; regulates NTRK2. Interacts with SQSTM1 and KIDINS220. Interacts (phosphorylated upon ligand-binding) with FRS2; activates the MAPK signaling pathway. Interacts with APPL1. Interacts with MAPK8IP3/JIP3 and KLC1; interaction with KLC1 is mediated by MAPK8IP3/JIP3. Interacts with SORL1; this interaction facilitates NTRK2 trafficking between synaptic plasma membranes, postsynaptic densities and cell soma, hence positively regulates BDNF signaling. Interacts with SLITRK2. In terms of processing, phosphorylated. Undergoes ligand-mediated autophosphorylation that is required for interaction with SHC1 and PLCG1 and other downstream effectors. Some isoforms are not phosphorylated. Ubiquitinated. Undergoes polyubiquitination upon activation; regulated by NGFR. Ubiquitination regulates the internalization of the receptor. In terms of tissue distribution, expressed in the brain, in neurons (at protein level). Detected in hippocampus (at protein level). Widely expressed in the central and peripheral nervous system. The different forms are differentially expressed in various cell types. Isoform GP95-TRKB is specifically expressed in glial cells.

Its subcellular location is the cell membrane. The protein resides in the endosome membrane. It localises to the early endosome membrane. It is found in the cell projection. The protein localises to the axon. Its subcellular location is the dendrite. The protein resides in the cytoplasm. It localises to the perinuclear region. It is found in the postsynaptic density. The catalysed reaction is L-tyrosyl-[protein] + ATP = O-phospho-L-tyrosyl-[protein] + ADP + H(+). Its activity is regulated as follows. The formation of active receptors dimers able to fully transduce the ligand-mediated signal, may be negatively regulated by the formation of inactive heterodimers with the non-catalytic isoforms. The neuronal activity and the influx of calcium positively regulate the kinase activity and the internalization of the receptor which are both important for active signaling. Regulated by NGFR that may control the internalization of the receptor. NGFR may also stimulate the activation by BDNF compared to NTF3 and NTF4. SH2D1A inhibits the autophosphorylation of the receptor, and alters the recruitment and activation of downstream effectors and signaling cascades. Its function is as follows. Receptor tyrosine kinase involved in the development and the maturation of the central and the peripheral nervous systems through regulation of neuron survival, proliferation, migration, differentiation, and synapse formation and plasticity. Receptor for BDNF/brain-derived neurotrophic factor and NTF4/neurotrophin-4. Alternatively can also bind NTF3/neurotrophin-3 which is less efficient in activating the receptor but regulates neuron survival through NTRK2. Upon ligand-binding, undergoes homodimerization, autophosphorylation and activation. Recruits, phosphorylates and/or activates several downstream effectors including SHC1, FRS2, SH2B1, SH2B2 and PLCG1 that regulate distinct overlapping signaling cascades. Through SHC1, FRS2, SH2B1, SH2B2 activates the GRB2-Ras-MAPK cascade that regulates for instance neuronal differentiation including neurite outgrowth. Through the same effectors controls the Ras-PI3 kinase-AKT1 signaling cascade that mainly regulates growth and survival. Through PLCG1 and the downstream protein kinase C-regulated pathways controls synaptic plasticity. Thereby, plays a role in learning and memory by regulating both short term synaptic function and long-term potentiation. PLCG1 also leads to NF-Kappa-B activation and the transcription of genes involved in cell survival. Hence, it is able to suppress anoikis, the apoptosis resulting from loss of cell-matrix interactions. Isoform GP95-TRKB may also play a role in neutrophin-dependent calcium signaling in glial cells and mediate communication between neurons and glia. The chain is BDNF/NT-3 growth factors receptor from Mus musculus (Mouse).